Here is a 470-residue protein sequence, read N- to C-terminus: Meiosis-specific with OB domain-containing protein (470 aa).

A DNA-binding region (OB) is located at residues 167–272 (IINVLAAVRS…EANILLNFIR (106 aa)).

The protein belongs to the MEIOB family. As to quaternary structure, component of a multiprotein complex with RPA2 and SPATA22. Interacts with SPATA22. Interacts with the complex BRME1:HSF2BP:BRCA2.

The protein localises to the cytoplasm. Its subcellular location is the nucleus. It localises to the chromosome. Its function is as follows. Single-stranded DNA-binding protein required for homologous recombination in meiosis I. Required for double strand breaks (DSBs) repair and crossover formation and promotion of faithful and complete synapsis. Not required for the initial loading of recombinases but required to maintain a proper number of RAD51 and DMC1 foci after the zygotene stage. May act by ensuring the stabilization of recombinases, which is required for successful homology search and meiotic recombination. Displays Single-stranded DNA 3'-5' exonuclease activity in vitro. The polypeptide is Meiosis-specific with OB domain-containing protein (Rattus norvegicus (Rat)).